The following is a 362-amino-acid chain: tRNA-specific 2-thiouridylase MnmA (362 aa).

ATP contacts are provided by residues 9-16 and Met-35; that span reads GMSGGVDS. Positions 95–97 are interaction with target base in tRNA; it reads NPD. Residue Cys-100 is the Nucleophile of the active site. Cysteines 100 and 197 form a disulfide. Position 124 (Gly-124) interacts with ATP. The tract at residues 147-149 is interaction with tRNA; sequence KDQ. Residue Cys-197 is the Cysteine persulfide intermediate of the active site. Residues 309–310 are interaction with tRNA; that stretch reads RY.

Belongs to the MnmA/TRMU family.

It localises to the cytoplasm. It catalyses the reaction S-sulfanyl-L-cysteinyl-[protein] + uridine(34) in tRNA + AH2 + ATP = 2-thiouridine(34) in tRNA + L-cysteinyl-[protein] + A + AMP + diphosphate + H(+). Catalyzes the 2-thiolation of uridine at the wobble position (U34) of tRNA, leading to the formation of s(2)U34. In Cupriavidus pinatubonensis (strain JMP 134 / LMG 1197) (Cupriavidus necator (strain JMP 134)), this protein is tRNA-specific 2-thiouridylase MnmA.